Here is a 166-residue protein sequence, read N- to C-terminus: DHIIPLQIKNSQDSQIISFFKADKGSVSRQVHPPWPVPCKSKLQEQDSSESKESKAEQVKINNCVVQNAMLYIENNYFNDINIDTVAFSVGVSRSYLVKQFKLATNKTINNRIIEVRIEQAKKVLLKKSVTETAYEVGFNNSNYFATVFKKRTNYTPKQFKRTFSS.

The interval 28-55 (SRQVHPPWPVPCKSKLQEQDSSESKESK) is disordered. Basic and acidic residues predominate over residues 42 to 55 (KLQEQDSSESKESK). An HTH araC/xylS-type domain is found at 67 to 163 (QNAMLYIENN…NYTPKQFKRT (97 aa)). 2 DNA-binding regions (H-T-H motif) span residues 84 to 105 (DTVA…KLAT) and 130 to 153 (VTET…KKRT).

This is an uncharacterized protein from Pseudoalteromonas carrageenovora (Alteromonas carrageenovora).